The chain runs to 745 residues: Mitogen-activated protein kinase kinase kinase zak-1 (745 aa).

Positions 31 to 305 constitute a Protein kinase domain; it reads IQVGDHIGVG…KVMDECEKFM (275 aa). ATP contacts are provided by residues 37 to 45 and Lys63; that span reads IGVGTFGAV. The active-site Proton acceptor is Asp159. Positions 307–352 form a coiled coil; the sequence is LEDWKTEIEKQEKNVEKMRKDLEKRREQLEIREKALKQRMKVEQAV. Positions 366–438 constitute an SAM domain; the sequence is WSEHHTSHWV…MKMIRKLADT (73 aa). A disordered region spans residues 693–745; the sequence is LTRRRRTTTTNSEDTEKSDTNNKTPESQARRVHVHGGKDKWNWKKGKSRPKFT. Residues 735 to 745 are compositionally biased toward basic residues; the sequence is WKKGKSRPKFT.

It belongs to the protein kinase superfamily. STE Ser/Thr protein kinase family. MAP kinase kinase kinase subfamily. The cofactor is Mg(2+). As to expression, widely expressed; expressed in most tissues, including intestines, muscle and the nervous system.

The protein localises to the cytoplasm. It is found in the nucleus. It catalyses the reaction L-seryl-[protein] + ATP = O-phospho-L-seryl-[protein] + ADP + H(+). The enzyme catalyses L-threonyl-[protein] + ATP = O-phospho-L-threonyl-[protein] + ADP + H(+). Functionally, stress-activated component of a protein kinase signal transduction cascade that promotes programmed cell death in response to ribotoxic stress. Acts as the proximal sensor of ribotoxic stress: directly binds to the ribosome, thereby acting as a sentinel for colliding ribosomes. Upon ribosome collisions, activates the stress-activated protein kinase signal transduction cascade, leading to programmed cell death. Acts by catalyzing phosphorylation of MAP kinase kinases, leading to activation of the JNK and MAP kinase p38 pathways. The protein is Mitogen-activated protein kinase kinase kinase zak-1 of Caenorhabditis elegans.